A 310-amino-acid polypeptide reads, in one-letter code: Putative RING-H2 finger protein ATL53 (310 aa).

Residues 62 to 82 (VIAIFGIFATAFLLAAYYTLV) traverse the membrane as a helical segment. Residues 155–197 (CSICLGEFNEDESLRLLPKCNHTFHVVCIDRWLKSHSNCPLCR) form an RING-type; atypical zinc finger.

The protein belongs to the RING-type zinc finger family. ATL subfamily.

Its subcellular location is the membrane. It catalyses the reaction S-ubiquitinyl-[E2 ubiquitin-conjugating enzyme]-L-cysteine + [acceptor protein]-L-lysine = [E2 ubiquitin-conjugating enzyme]-L-cysteine + N(6)-ubiquitinyl-[acceptor protein]-L-lysine.. It participates in protein modification; protein ubiquitination. This Arabidopsis thaliana (Mouse-ear cress) protein is Putative RING-H2 finger protein ATL53 (ATL53).